A 251-amino-acid polypeptide reads, in one-letter code: Protein FAM216A (251 aa).

Residues 1–16 are compositionally biased toward polar residues; it reads MPNQGPVSDWTECSSS. Residues 1–49 form a disordered region; it reads MPNQGPVSDWTECSSSAEPPAVARAEGGGGGSAGHSYYQNSKDRIKDGH.

This sequence belongs to the FAM216 family.

In Bos taurus (Bovine), this protein is Protein FAM216A (FAM216A).